The following is a 497-amino-acid chain: Probable zinc metalloprotease TRV_03476 (497 aa).

A signal peptide spans 1 to 24; sequence MRFLISSLLSGLALLTSLHAFVLA. N-linked (GlcNAc...) asparagine glycans are attached at residues asparagine 100 and asparagine 121. The Zn(2+) site is built by histidine 171, aspartate 191, and glutamate 227. An N-linked (GlcNAc...) asparagine glycan is attached at asparagine 242. Zn(2+) is bound at residue aspartate 254. The region spanning 411–497 is the Fibronectin type-III domain; that stretch reads MPRNVRVNTN…ERGVAVLPFP (87 aa). N-linked (GlcNAc...) asparagine glycosylation is present at asparagine 424.

This sequence belongs to the peptidase M28 family. M28B subfamily. Zn(2+) serves as cofactor.

The protein localises to the secreted. The protein is Probable zinc metalloprotease TRV_03476 of Trichophyton verrucosum (strain HKI 0517).